We begin with the raw amino-acid sequence, 424 residues long: Tubulin-specific chaperone cofactor E-like protein (424 aa).

Residues Ser18 and Ser41 each carry the phosphoserine modification. LRR repeat units lie at residues 73–98, 99–123, 124–147, 150–172, 173–197, 199–224, and 226–250; these read CAHVSELDLSDNKLEDWHEVSKIVSN, VPQLEFLNLSSNPLNLSVLERTCAG, SFSGVRKLVLNNSKASWETVHMIL, LPDLEELFLCLNDYETVSCPSIC, CHSLKLLHITDNNLQDWTEIRKLGV, FPSLDTLVLANNHLNAIEEPDDSLAR, and FPNLRSISLHKSGLQSWEDIDKLNS. The 42-residue stretch at 262 to 303 folds into the LRRCT domain; the sequence is IPLLQPYTTEERRKLVIARLPSVSKLNGSVVTDGEREDSERF. The Ubiquitin-like domain maps to 334-424; sequence AEVDLRPQSS…DKIYVESKTK (91 aa). The stretch at 349–375 forms a coiled coil; sequence HFNDQVEEMSIRLDQTVAELKKQLKTL.

Abundantly expressed in testis, but is also present in several tissues at a much lower level.

The protein resides in the cytoplasm. The protein localises to the cytoskeleton. Its function is as follows. Acts as a regulator of tubulin stability. The chain is Tubulin-specific chaperone cofactor E-like protein (TBCEL) from Homo sapiens (Human).